A 226-amino-acid polypeptide reads, in one-letter code: PKHD-type hydroxylase TERTU_2553 (226 aa).

In terms of domain architecture, Fe2OG dioxygenase spans 78 to 177 (KIYPPKFNCY…RVASFIWIQS (100 aa)). Residues H96, D98, and H158 each coordinate Fe cation. Position 168 (R168) interacts with 2-oxoglutarate.

Requires Fe(2+) as cofactor. L-ascorbate serves as cofactor.

The protein is PKHD-type hydroxylase TERTU_2553 of Teredinibacter turnerae (strain ATCC 39867 / T7901).